We begin with the raw amino-acid sequence, 61 residues long: Temporin-CG3 (61 aa).

An N-terminal signal peptide occupies residues 1–22 (MFTMKKPLLLLFFLATINLSLC). Positions 23–44 (EQERNAEEERRDEPDERNAEVE) are cleaved as a propeptide — removed in mature form.

The protein belongs to the frog skin active peptide (FSAP) family. Temporin subfamily. Expressed by the skin glands.

Its subcellular location is the secreted. Functionally, antimicrobial peptide active against a variety of Gram-positive bacterial strains but not against Gram-negative bacteria. Has weak antifungal activity against a slime mold isolate. Has weak hemolytic activity against human erythrocytes. This is Temporin-CG3 from Amolops chunganensis (Chungan torrent frog).